A 248-amino-acid chain; its full sequence is 2,3-bisphosphoglycerate-dependent phosphoglycerate mutase (248 aa).

Substrate contacts are provided by residues 8–15 (RHGESEWN), 21–22 (TG), Arg-60, 87–90 (ERHY), Lys-98, 114–115 (RR), and 183–184 (GN). Residue His-9 is the Tele-phosphohistidine intermediate of the active site. The active-site Proton donor/acceptor is the Glu-87.

It belongs to the phosphoglycerate mutase family. BPG-dependent PGAM subfamily.

The catalysed reaction is (2R)-2-phosphoglycerate = (2R)-3-phosphoglycerate. It participates in carbohydrate degradation; glycolysis; pyruvate from D-glyceraldehyde 3-phosphate: step 3/5. Catalyzes the interconversion of 2-phosphoglycerate and 3-phosphoglycerate. This chain is 2,3-bisphosphoglycerate-dependent phosphoglycerate mutase, found in Borrelia turicatae (strain 91E135).